The chain runs to 111 residues: Universal stress protein B (111 aa).

2 consecutive transmembrane segments (helical) span residues 1 to 21 (MINT…NMLR) and 90 to 110 (FILT…LMLW).

It belongs to the universal stress protein B family.

The protein localises to the cell inner membrane. The sequence is that of Universal stress protein B from Edwardsiella ictaluri (strain 93-146).